The chain runs to 122 residues: S-adenosylmethionine decarboxylase proenzyme (122 aa).

The active-site Schiff-base intermediate with substrate; via pyruvic acid is the serine 69. Serine 69 carries the pyruvic acid (Ser); by autocatalysis modification. Histidine 74 acts as the Proton acceptor; for processing activity in catalysis. Catalysis depends on cysteine 89, which acts as the Proton donor; for catalytic activity.

This sequence belongs to the prokaryotic AdoMetDC family. Type 1 subfamily. In terms of assembly, heterotetramer of two alpha and two beta chains arranged as a dimer of alpha/beta heterodimers. The cofactor is pyruvate. Post-translationally, is synthesized initially as an inactive proenzyme. Formation of the active enzyme involves a self-maturation process in which the active site pyruvoyl group is generated from an internal serine residue via an autocatalytic post-translational modification. Two non-identical subunits are generated from the proenzyme in this reaction, and the pyruvate is formed at the N-terminus of the alpha chain, which is derived from the carboxyl end of the proenzyme. The post-translation cleavage follows an unusual pathway, termed non-hydrolytic serinolysis, in which the side chain hydroxyl group of the serine supplies its oxygen atom to form the C-terminus of the beta chain, while the remainder of the serine residue undergoes an oxidative deamination to produce ammonia and the pyruvoyl group blocking the N-terminus of the alpha chain.

The enzyme catalyses S-adenosyl-L-methionine + H(+) = S-adenosyl 3-(methylsulfanyl)propylamine + CO2. It functions in the pathway amine and polyamine biosynthesis; S-adenosylmethioninamine biosynthesis; S-adenosylmethioninamine from S-adenosyl-L-methionine: step 1/1. In terms of biological role, catalyzes the decarboxylation of S-adenosylmethionine to S-adenosylmethioninamine (dcAdoMet), the propylamine donor required for the synthesis of the polyamines spermine and spermidine from the diamine putrescine. This chain is S-adenosylmethionine decarboxylase proenzyme, found in Saccharolobus islandicus (strain L.S.2.15 / Lassen #1) (Sulfolobus islandicus).